The primary structure comprises 181 residues: Ribonuclease HII (181 aa).

An RNase H type-2 domain is found at 1-181 (MICGIDEVGR…SLHRKNFKLI (181 aa)). A divalent metal cation contacts are provided by D6, E7, and D98.

Belongs to the RNase HII family. Mn(2+) is required as a cofactor. Requires Mg(2+) as cofactor.

The protein localises to the cytoplasm. It catalyses the reaction Endonucleolytic cleavage to 5'-phosphomonoester.. Its function is as follows. Endonuclease that specifically degrades the RNA of RNA-DNA hybrids. The sequence is that of Ribonuclease HII from Borreliella afzelii (strain PKo) (Borrelia afzelii).